We begin with the raw amino-acid sequence, 478 residues long: Hemolysin secretion protein D, chromosomal (478 aa).

The Cytoplasmic segment spans residues 1 to 59; it reads MKTWLMGFSEFLLRYKLVWSETWKIRKQLDTPVREKDENEFLPAHLELIETPVSRRPRL. A helical; Signal-anchor for type II membrane protein membrane pass occupies residues 60–80; sequence VAYFIMGFLVIAFILSVLGQV. Residues 81 to 478 lie on the Periplasmic side of the membrane; sequence EIVATANGKL…ESVTESLHER (398 aa).

The protein belongs to the membrane fusion protein (MFP) (TC 8.A.1) family.

It is found in the cell inner membrane. In terms of biological role, involved in the transport of hemolysin A. This chain is Hemolysin secretion protein D, chromosomal (hlyD), found in Escherichia coli.